We begin with the raw amino-acid sequence, 476 residues long: Proline--tRNA ligase 2 (476 aa).

Belongs to the class-II aminoacyl-tRNA synthetase family. ProS type 3 subfamily. In terms of assembly, homodimer.

The protein resides in the cytoplasm. It catalyses the reaction tRNA(Pro) + L-proline + ATP = L-prolyl-tRNA(Pro) + AMP + diphosphate. In terms of biological role, catalyzes the attachment of proline to tRNA(Pro) in a two-step reaction: proline is first activated by ATP to form Pro-AMP and then transferred to the acceptor end of tRNA(Pro). The sequence is that of Proline--tRNA ligase 2 from Bacillus cereus (strain ZK / E33L).